The sequence spans 277 residues: uncharacterized protein (277 aa).

A run of 4 helical transmembrane segments spans residues 37–59, 63–82, 214–236, and 246–268; these read YLRYAIIPGLVTGVFSFLLLYIW, LIFGLMGSVYGLKVLMPKVI, MLCGVIVVFVLAITFSFGFKTYI, and WITSGIYMTLMCFFFKSFTTYLF.

It localises to the cell membrane. This is an uncharacterized protein from Bacillus anthracis.